Consider the following 295-residue polypeptide: Taste receptor type 2 member 120 (295 aa).

Over 1 to 5 the chain is Extracellular; that stretch reads MDLTE. The chain crosses the membrane as a helical span at residues 6-26; it reads WIVTIIMMIEFLLGNCANFFI. Residues 27-45 are Cytoplasmic-facing; that stretch reads MVVNAIDCMKRRKISSADR. The helical transmembrane segment at 46–66 threads the bilayer; the sequence is IITALAISRIGLLWAMLMNWH. Residues 67–83 are Extracellular-facing; it reads SRVYTTDTYSFQVTAFS. The helical transmembrane segment at 84–104 threads the bilayer; it reads GIIWAITNHFTTWLGTILSMF. Topologically, residues 105 to 125 are cytoplasmic; sequence YLFKIANFSNCLFLHLKRKLD. A helical transmembrane segment spans residues 126-146; the sequence is SVLLVIFLVSSLLVFAYLGVV. The Extracellular portion of the chain corresponds to 147-177; it reads NIKKIAWLSVHEGNVTVKSKLMNIASIRDTL. N-linked (GlcNAc...) asparagine glycosylation occurs at Asn160. The chain crosses the membrane as a helical span at residues 178–198; sequence LFSLINIAPFGISLTCVLLLI. At 199-230 the chain is on the cytoplasmic side; the sequence is YSLGKHLKNMKFYGKGCQDQSTMVHIRALQTV. The chain crosses the membrane as a helical span at residues 231-251; that stretch reads VSFLLLYATYSSCVIISGWSI. At 252–255 the chain is on the extracellular side; sequence QNVP. The chain crosses the membrane as a helical span at residues 256–276; sequence IFLFCVTIGAFYPAGHSCILI. At 277 to 295 the chain is on the cytoplasmic side; the sequence is WGNQKLKQFLLLFLRQMKC.

It belongs to the G-protein coupled receptor T2R family.

Its subcellular location is the membrane. Functionally, putative taste receptor which may play a role in the perception of bitterness. The polypeptide is Taste receptor type 2 member 120 (Rattus norvegicus (Rat)).